Reading from the N-terminus, the 307-residue chain is Acetyl-coenzyme A carboxylase carboxyl transferase subunit beta (307 aa).

The tract at residues Met-1–Arg-21 is disordered. The region spanning Leu-43–Ala-307 is the CoA carboxyltransferase N-terminal domain.

It belongs to the AccD/PCCB family. In terms of assembly, acetyl-CoA carboxylase is a heterohexamer composed of biotin carboxyl carrier protein (AccB), biotin carboxylase (AccC) and two subunits each of ACCase subunit alpha (AccA) and ACCase subunit beta (AccD).

It localises to the cytoplasm. The enzyme catalyses N(6)-carboxybiotinyl-L-lysyl-[protein] + acetyl-CoA = N(6)-biotinyl-L-lysyl-[protein] + malonyl-CoA. The protein operates within lipid metabolism; malonyl-CoA biosynthesis; malonyl-CoA from acetyl-CoA: step 1/1. In terms of biological role, component of the acetyl coenzyme A carboxylase (ACC) complex. Biotin carboxylase (BC) catalyzes the carboxylation of biotin on its carrier protein (BCCP) and then the CO(2) group is transferred by the transcarboxylase to acetyl-CoA to form malonyl-CoA. The chain is Acetyl-coenzyme A carboxylase carboxyl transferase subunit beta from Phenylobacterium zucineum (strain HLK1).